Reading from the N-terminus, the 1642-residue chain is Cholesterol transporter ABCA5 (1642 aa).

The helical transmembrane segment at 32-52 threads the bilayer; sequence SVQEILFPLFFLFWLILISMM. Asn-86 and Asn-190 each carry an N-linked (GlcNAc...) asparagine glycan. 6 helical membrane-spanning segments follow: residues 220–240, 264–284, 297–317, 327–347, 355–375, and 396–416; these read VILI…AIHI, LSWV…MAVI, IVIF…ALML, VGVV…LIVL, LVWL…AQVM, and LIIT…LAVY. Asn-458 is a glycosylation site (N-linked (GlcNAc...) asparagine). The ABC transporter 1 domain maps to 478–713; sequence IRISGIQKAY…WGIGYRLSMY (236 aa). 514-521 provides a ligand contact to ATP; sequence GHSGTGKS. Residues 866-886 traverse the membrane as a helical segment; sequence LLLLLIFFAVQIFMFLVHHSF. Asn-919 carries an N-linked (GlcNAc...) asparagine glycan. A helical membrane pass occupies residues 967–987; it reads VFTAVFNSTMVYSLPVMMNII. The N-linked (GlcNAc...) asparagine glycan is linked to Asn-996. The next 6 helical transmembrane spans lie at 1021–1041, 1071–1091, 1102–1122, 1139–1159, 1164–1184, and 1207–1227; these read LYFQ…YFAM, VVDI…LFAF, FLAV…FTYI, FIYS…FFLG, AVFH…GCLI, and LLVA…LLQH. The ABC transporter 2 domain occupies 1290 to 1533; that stretch reads IMVYNLHKEY…FGKGYFLEIK (244 aa). 1333 to 1340 is a binding site for ATP; sequence GPNGAGKS.

It belongs to the ABC transporter superfamily. ABCA family. Post-translationally, N-glycosylated. Expressed in testis, epididymis, lung and brain.

Its subcellular location is the lysosome membrane. It localises to the late endosome membrane. It is found in the golgi apparatus membrane. The protein resides in the cell membrane. The catalysed reaction is cholesterol(in) + ATP + H2O = cholesterol(out) + ADP + phosphate + H(+). Cholesterol efflux transporter in macrophages that is responsible for APOAI/high-density lipoproteins (HDL) formation at the plasma membrane under high cholesterol levels and participates in reverse cholesterol transport. May play a role in the processing of autolysosomes. The polypeptide is Cholesterol transporter ABCA5 (Rattus norvegicus (Rat)).